Consider the following 95-residue polypeptide: MKKITLFFTALLCLFSTSVLAESNSIPKQCEQLFKETENLIAQAEKQPGTHIQVNKIKSKLNQSKQQILQMELATQLKSCEVGLAKLSNLKSYSE.

Residues 1 to 21 (MKKITLFFTALLCLFSTSVLA) form the signal peptide.

This is an uncharacterized protein from Haemophilus influenzae (strain ATCC 51907 / DSM 11121 / KW20 / Rd).